A 356-amino-acid polypeptide reads, in one-letter code: Tyrosine recombinase XerS (356 aa).

Residues 16–121 enclose the Core-binding (CB) domain; it reads IMPWFVLDYY…ALSSLYKYLT (106 aa). Residues 169-354 enclose the Tyr recombinase domain; the sequence is EFLDYVDCEY…VNDEQKNALD (186 aa). Active-site residues include arginine 210, lysine 234, histidine 306, arginine 309, and histidine 332. Tyrosine 341 functions as the O-(3'-phospho-DNA)-tyrosine intermediate in the catalytic mechanism.

The protein belongs to the 'phage' integrase family. XerS subfamily.

It is found in the cytoplasm. FtsK is required for recombination. Site-specific tyrosine recombinase, which acts by catalyzing the cutting and rejoining of the recombining DNA molecules. Essential to convert dimers of the bacterial chromosome into monomers to permit their segregation at cell division. The protein is Tyrosine recombinase XerS of Streptococcus uberis (strain ATCC BAA-854 / 0140J).